An 869-amino-acid chain; its full sequence is Alanine--tRNA ligase (869 aa).

Zn(2+) contacts are provided by His-559, His-563, Cys-660, and His-664.

This sequence belongs to the class-II aminoacyl-tRNA synthetase family. It depends on Zn(2+) as a cofactor.

The protein localises to the cytoplasm. The enzyme catalyses tRNA(Ala) + L-alanine + ATP = L-alanyl-tRNA(Ala) + AMP + diphosphate. Catalyzes the attachment of alanine to tRNA(Ala) in a two-step reaction: alanine is first activated by ATP to form Ala-AMP and then transferred to the acceptor end of tRNA(Ala). Also edits incorrectly charged Ser-tRNA(Ala) and Gly-tRNA(Ala) via its editing domain. This is Alanine--tRNA ligase from Herminiimonas arsenicoxydans.